Here is a 1232-residue protein sequence, read N- to C-terminus: uncharacterized protein (1232 aa).

Belongs to the Mg-chelatase subunit H family.

This is an uncharacterized protein from Methanocaldococcus jannaschii (strain ATCC 43067 / DSM 2661 / JAL-1 / JCM 10045 / NBRC 100440) (Methanococcus jannaschii).